We begin with the raw amino-acid sequence, 491 residues long: Probable malate:quinone oxidoreductase (491 aa).

The protein belongs to the MQO family. Requires FAD as cofactor.

The enzyme catalyses (S)-malate + a quinone = a quinol + oxaloacetate. It functions in the pathway carbohydrate metabolism; tricarboxylic acid cycle; oxaloacetate from (S)-malate (quinone route): step 1/1. The sequence is that of Probable malate:quinone oxidoreductase from Actinobacillus pleuropneumoniae serotype 7 (strain AP76).